The chain runs to 483 residues: Probable glycine dehydrogenase (decarboxylating) subunit 2 (483 aa).

A disordered region spans residues 1–33 (MLIFEHSRKNRRNYSQAPATRPAKNNIPDHLKR). An N6-(pyridoxal phosphate)lysine modification is found at lysine 264.

It belongs to the GcvP family. C-terminal subunit subfamily. In terms of assembly, the glycine cleavage system is composed of four proteins: P, T, L and H. In this organism, the P 'protein' is a heterodimer of two subunits. The cofactor is pyridoxal 5'-phosphate.

It catalyses the reaction N(6)-[(R)-lipoyl]-L-lysyl-[glycine-cleavage complex H protein] + glycine + H(+) = N(6)-[(R)-S(8)-aminomethyldihydrolipoyl]-L-lysyl-[glycine-cleavage complex H protein] + CO2. Functionally, the glycine cleavage system catalyzes the degradation of glycine. The P protein binds the alpha-amino group of glycine through its pyridoxal phosphate cofactor; CO(2) is released and the remaining methylamine moiety is then transferred to the lipoamide cofactor of the H protein. This chain is Probable glycine dehydrogenase (decarboxylating) subunit 2, found in Nitrosomonas europaea (strain ATCC 19718 / CIP 103999 / KCTC 2705 / NBRC 14298).